A 636-amino-acid polypeptide reads, in one-letter code: Carbon monoxide dehydrogenase 2 (636 aa).

Positions 39, 47, 48, 51, 56, and 70 each coordinate [4Fe-4S] cluster. [Ni-4Fe-5S] cluster-binding residues include His-261, Cys-295, Cys-333, Cys-446, Cys-476, and Cys-526.

Belongs to the Ni-containing carbon monoxide dehydrogenase family. In terms of assembly, homodimer. It depends on [4Fe-4S] cluster as a cofactor. [Ni-4Fe-5S] cluster serves as cofactor.

It localises to the cytoplasm. Its subcellular location is the cell membrane. It catalyses the reaction CO + 2 oxidized [2Fe-2S]-[ferredoxin] + H2O = 2 reduced [2Fe-2S]-[ferredoxin] + CO2 + 2 H(+). With respect to regulation, inactivated by O(2). Functionally, CODH oxidizes carbon monoxide coupled, via CooF, to the reduction of a hydrogen cation by a hydrogenase (possibly CooH). This chain is Carbon monoxide dehydrogenase 2 (cooS2), found in Carboxydothermus hydrogenoformans (strain ATCC BAA-161 / DSM 6008 / Z-2901).